A 263-amino-acid polypeptide reads, in one-letter code: Kallikrein 1-related peptidase b27 (263 aa).

Residues 1-17 form the signal peptide; sequence MRFLILFLALSLGGIDA. Residues 18-24 constitute a propeptide, activation peptide; that stretch reads APPVQSR. In terms of domain architecture, Peptidase S1 spans 25 to 260; sequence IIGGFKCKKN…FTSWIKDTMA (236 aa). Intrachain disulfides connect Cys31–Cys175, Cys50–Cys66, Cys154–Cys221, Cys186–Cys200, and Cys211–Cys236. The active-site Charge relay system is the His65. N-linked (GlcNAc...) asparagine glycans are attached at residues Asn69 and Asn105. Catalysis depends on Asp122, which acts as the Charge relay system. The active-site Charge relay system is the Ser215.

The protein belongs to the peptidase S1 family. Kallikrein subfamily. Expressed in testis and submaxillary gland. Not expressed in heart, brain, spleen, lung, liver, muscle, kidney and ovary. In the testis, expression localized specifically to Leydig cells in the interstitial tissues.

With respect to regulation, strongly inhibited by protease inhibitors diisopropyl fluorophosphate, phenylmethanesulfonyl fluoride and SBTI. Its function is as follows. Serine protease with chymotrypsin-like cleavage specificity. Shows activity towards casein, gelatin, IGFBP3 and fibronectin but not towards laminin or collagens I and IV. Does not hydrolyze kininogin to release Lys-bradykinin. The protein is Kallikrein 1-related peptidase b27 (Klk1b27) of Mus musculus (Mouse).